We begin with the raw amino-acid sequence, 330 residues long: Thiosulfate transporter TsuA (330 aa).

The Periplasmic segment spans residues 1-2; sequence MI. Residues 3 to 18 form a helical membrane-spanning segment; it reads WTGLLVGFLFGIVLQR. Residues 19–36 lie on the Cytoplasmic side of the membrane; sequence GRICFNSAFRDVLLFKDN. A helical membrane pass occupies residues 37–59; the sequence is YLFKLAVFTLALEMILFVLLSQV. Topologically, residues 60–70 are periplasmic; sequence GLMQMNPKPLN. The helical transmembrane segment at 71–87 threads the bilayer; sequence LVGNIIGGFVFGLGMVL. The Cytoplasmic portion of the chain corresponds to 88-102; the sequence is AGGCASGVTYRVGEG. Residues 103-121 form a helical membrane-spanning segment; the sequence is LTTAWFAALFYGLGAYATK. Residues 122-162 lie on the Periplasmic side of the membrane; it reads SGAFSWWLSWVGQFKSPLSVEESAYYVKGAGPTISSVLGLN. A helical membrane pass occupies residues 163–180; sequence PWIPALVIAALFILWAFG. The Cytoplasmic portion of the chain corresponds to 181-189; it reads TKTTSRETK. A helical membrane pass occupies residues 190 to 211; the sequence is FNWKIASVCLALVAGLGFITST. Topologically, residues 212–239 are periplasmic; sequence LSGRKYGLGITGGWINLFQGFLTNSPLN. Residues 240-258 form a helical membrane-spanning segment; that stretch reads WEGLEIVGIILGAGVAAAV. Topologically, residues 259 to 269 are cytoplasmic; sequence AGEFKLRMPKN. A helical transmembrane segment spans residues 270 to 289; that stretch reads PVTYLQVGIGGLLMGIGAVT. The Periplasmic portion of the chain corresponds to 290–306; that stretch reads AGGCNIGHFLTGVPQLA. A helical transmembrane segment spans residues 307–326; it reads LSSWLASIFFILGNWTMAWI. The Cytoplasmic segment spans residues 327–330; the sequence is LFRR.

This sequence belongs to the TsuA/YedE (TC 9.B.102) family.

It is found in the cell inner membrane. The enzyme catalyses thiosulfate(in) = thiosulfate(out). Its function is as follows. Mediates thiosulfate uptake. This Spirochaeta thermophila (strain ATCC 700085 / DSM 6578 / Z-1203) protein is Thiosulfate transporter TsuA.